Consider the following 450-residue polypeptide: Phosphoglucosamine mutase (450 aa).

Serine 101 functions as the Phosphoserine intermediate in the catalytic mechanism. Positions 101, 240, 242, and 244 each coordinate Mg(2+). Serine 101 is subject to Phosphoserine.

The protein belongs to the phosphohexose mutase family. Mg(2+) serves as cofactor. Post-translationally, activated by phosphorylation. Phosphorylated by StkP in vivo.

The catalysed reaction is alpha-D-glucosamine 1-phosphate = D-glucosamine 6-phosphate. Functionally, catalyzes the conversion of glucosamine-6-phosphate to glucosamine-1-phosphate. This chain is Phosphoglucosamine mutase, found in Streptococcus pneumoniae (strain ATCC BAA-255 / R6).